The sequence spans 1733 residues: Serine-aspartate repeat-containing protein F (1733 aa).

The first 45 residues, 1-45 (MKKRRQGPINKRVDFLSNKVNKYSIRKFTVGTASILVGATLMFGA), serve as a signal peptide directing secretion. Residues 46–678 (ADNEAKAAED…GSSTAQGDNP (633 aa)) are ligand binding A region. 2 disordered regions span residues 51–269 (KAAE…SVND) and 332–351 (PLALNRSQSKNSPHKSASPR). Basic and acidic residues predominate over residues 61–74 (ASKEEQKGSRDNEN). Composition is skewed to polar residues over residues 85–99 (GSHSSEKTTNVNNAT) and 146–168 (PKTSTTQQDSTEKNNPSLKDNLN). Basic and acidic residues predominate over residues 175-184 (KESKTDEHST). The segment covering 186-226 (QAQMSTNKSNLDTNDSPTQSEKTSSQANNDSTDNQSAPSKQ) has biased composition (polar residues). Over residues 227 to 253 (LDSKPSEQKVYKTKFNDEPTQDVEHTT) the composition is skewed to basic and acidic residues. 2 stretches are compositionally biased toward polar residues: residues 255 to 266 (KLKTPSVSTDSS) and 336 to 346 (NRSQSKNSPHK). 4 consecutive CNA-B domains span residues 679–797 (TYSL…YLTP), 798–907 (KYNV…FYKP), 908–1018 (TYNL…YKTP), and 1019–1129 (KYSV…FDDD). A type I collagen binding region region spans residues 679–1129 (TYSLGDYVWL…SIDNGYFDDD (451 aa)). A disordered region spans residues 862-890 (FETPEGYTPTKQNSGSDEGKDSNGTKTTV). The interval 1085-1708 (KPEGMTQTTA…ANEDHDSKGT (624 aa)) is disordered. Residues 1107–1119 (EDVRVTITDHDDF) are compositionally biased toward basic and acidic residues. Residues 1125–1684 (YFDDDSDSDS…DSDSDSDSDS (560 aa)) are compositionally biased toward acidic residues. Positions 1685–1706 (DSDKNAKDKLPDTGANEDHDSK) are enriched in basic and acidic residues. The LPXTG sorting signal signature appears at 1694 to 1698 (LPDTG). At T1697 the chain carries Pentaglycyl murein peptidoglycan amidated threonine. A propeptide spans 1698 to 1733 (GANEDHDSKGTLLGTLFAGLGALLLGRRRKKDNKEK) (removed by sortase).

It belongs to the serine-aspartate repeat-containing protein (SDr) family.

The protein resides in the secreted. The protein localises to the cell wall. Functionally, binds to type I collagen via alpha-2(I) or alpha-1(I) chains, although its affinity for the alpha-1(I) chain is significantly higher. Involved in bacterial adherence to transcutaneous drivelines from explanted ventricular assist devices. This Staphylococcus epidermidis protein is Serine-aspartate repeat-containing protein F (sdrF).